The primary structure comprises 248 residues: Triosephosphate isomerase (248 aa).

Asparagine 9–lysine 11 contributes to the substrate binding site. The Electrophile role is filled by histidine 94. Glutamate 166 acts as the Proton acceptor in catalysis. Substrate contacts are provided by residues glycine 172, serine 212, and glycine 233–glycine 234.

This sequence belongs to the triosephosphate isomerase family. Homodimer.

It localises to the cytoplasm. The enzyme catalyses D-glyceraldehyde 3-phosphate = dihydroxyacetone phosphate. It functions in the pathway carbohydrate biosynthesis; gluconeogenesis. Its pathway is carbohydrate degradation; glycolysis; D-glyceraldehyde 3-phosphate from glycerone phosphate: step 1/1. Involved in the gluconeogenesis. Catalyzes stereospecifically the conversion of dihydroxyacetone phosphate (DHAP) to D-glyceraldehyde-3-phosphate (G3P). The polypeptide is Triosephosphate isomerase (Alkaliphilus metalliredigens (strain QYMF)).